A 181-amino-acid chain; its full sequence is Large ribosomal subunit protein uL5c (181 aa).

Belongs to the universal ribosomal protein uL5 family. Part of the 50S ribosomal subunit; contacts the 5S rRNA.

The protein localises to the plastid. The protein resides in the chloroplast. Binds 5S rRNA, forms part of the central protuberance of the 50S subunit. The polypeptide is Large ribosomal subunit protein uL5c (rpl5) (Rhodomonas salina (Cryptomonas salina)).